Consider the following 470-residue polypeptide: Sorting nexin-17 (470 aa).

The PX domain maps to 1–109 (MHFSIPETES…SFLRRAQQET (109 aa)). A 1,2-diacyl-sn-glycero-3-phospho-(1D-myo-inositol-3-phosphate) is bound by residues R36, S38, K62, and R75. The region spanning 115–206 (EEVSLEVLLS…YKIVLRKSYW (92 aa)) is the Ras-associating domain. The tract at residues 115 to 432 (EEVSLEVLLS…DATRESMVKL (318 aa)) is FERM-like. The interval 270-432 (GYLRFDACVA…DATRESMVKL (163 aa)) is PTB-like F3 module. A phosphoserine mark is found at S336, S407, S409, S415, S421, S437, and S440. The disordered stretch occupies residues 401–426 (GGTLRRSDSQQAVKSPPLLESPDATR). The interval 458–470 (GNFAFEGIGDEDL) is interacts with the retriever complex.

Belongs to the sorting nexin family. As to quaternary structure, monomer. Interacts with APP (via cytoplasmic YXNPXY motif). Interacts with KIF1B. Interacts with the C-termini of P-selectin, PTC, LDLR, VLDLR, LRP1 and LRP8. Interacts with KRIT1 (via N-terminus). Interacts with HRAS. Interacts with ITGB1 and ITGB5 (via NPxY motif). Interacts with CCDC22 and CCDC93; the interaction associates SNX17 with the CCC complex. Interacts (via C-terminus) with VPS26C and VPS35L; the interactions are direct and associate SNX17 with the retriever complex.

Its subcellular location is the cytoplasm. It localises to the early endosome. It is found in the cytoplasmic vesicle membrane. Critical regulator of endosomal recycling of numerous surface proteins, including integrins, signaling receptor and channels. Binds to NPxY sequences in the cytoplasmic tails of target cargos. Associates with retriever and CCC complexes to prevent lysosomal degradation and promote cell surface recycling of numerous cargos such as integrins ITGB1, ITGB5 and their associated alpha subunits. Also required for maintenance of normal cell surface levels of APP and LRP1. Interacts with membranes containing phosphatidylinositol 3-phosphate (PtdIns(3P)). The sequence is that of Sorting nexin-17 (SNX17) from Homo sapiens (Human).